The sequence spans 351 residues: Quinolinate phosphoribosyltransferase [decarboxylating] 2, mitochondrial (351 aa).

Substrate-binding positions include arginine 142, 173–175 (TRK), arginine 197, lysine 207, glutamate 240, aspartate 267, 299–301 (SGN), and 320–322 (SGA).

It belongs to the NadC/ModD family.

Its subcellular location is the mitochondrion. It catalyses the reaction nicotinate beta-D-ribonucleotide + CO2 + diphosphate = quinolinate + 5-phospho-alpha-D-ribose 1-diphosphate + 2 H(+). It participates in alkaloid biosynthesis; nicotine biosynthesis. It functions in the pathway cofactor biosynthesis; NAD(+) biosynthesis; nicotinate D-ribonucleotide from quinolinate: step 1/1. Functionally, involved in the biosynthesis of pyridine alkaloid natural products, leading mainly to the production of anabasine, anatabine, nicotine and nornicotine, effective deterrents against herbivores with antiparasitic and pesticide properties (neurotoxins); nornicotine serves as the precursor in the synthesis of the carcinogen compound N'-nitrosonornicotine (NNN). Involved in the catabolism of quinolinic acid (QA). This Nicotiana glauca (Glaucous tobacco) protein is Quinolinate phosphoribosyltransferase [decarboxylating] 2, mitochondrial.